A 213-amino-acid polypeptide reads, in one-letter code: NADH dehydrogenase [ubiquinone] iron-sulfur protein 7, mitochondrial (213 aa).

The N-terminal 37 residues, 1-37 (MAVLSAPGLRGFRILGLRSSVGPAVQARSVHQSVATD), are a transit peptide targeting the mitochondrion. Over residues 30–44 (VHQSVATDGPSSTQP) the composition is skewed to polar residues. Positions 30–53 (VHQSVATDGPSSTQPALPKARAVA) are disordered. Residues C88 and C89 each contribute to the [4Fe-4S] cluster site. R111 carries the post-translational modification Hydroxyarginine. The [4Fe-4S] cluster site is built by C153 and C183.

This sequence belongs to the complex I 20 kDa subunit family. In terms of assembly, core subunit of respiratory chain NADH dehydrogenase (Complex I) which is composed of 45 different subunits. This is a component of the iron-sulfur (IP) fragment of the enzyme. It depends on [4Fe-4S] cluster as a cofactor. Post-translationally, hydroxylated ar Arg-111 by NDUFAF5 early in the pathway of assembly of complex I, before the formation of the juncture between peripheral and membrane arms.

It is found in the mitochondrion inner membrane. It carries out the reaction a ubiquinone + NADH + 5 H(+)(in) = a ubiquinol + NAD(+) + 4 H(+)(out). In terms of biological role, core subunit of the mitochondrial membrane respiratory chain NADH dehydrogenase (Complex I) which catalyzes electron transfer from NADH through the respiratory chain, using ubiquinone as an electron acceptor. Essential for the catalytic activity of complex I. This is NADH dehydrogenase [ubiquinone] iron-sulfur protein 7, mitochondrial (NDUFS7) from Pan troglodytes (Chimpanzee).